The following is a 339-amino-acid chain: Replication factor C subunit 2 (339 aa).

Position 48–55 (48–55 (YGPPGTGK)) interacts with ATP.

The protein belongs to the activator 1 small subunits family. Heterotetramer of subunits RFC2, RFC3, RFC4 and RFC5 that can form a complex with RFC1. As to expression, expressed in roots, leaves, shoot apical meristem (SAM), flag leaves and panicles.

It is found in the nucleus. Its function is as follows. May be involved in DNA replication and thus regulate cell proliferation. This chain is Replication factor C subunit 2 (RFC2), found in Oryza sativa subsp. japonica (Rice).